The primary structure comprises 215 residues: Cytochrome b6 (215 aa).

A helical transmembrane segment spans residues 32 to 52 (IFYCLGGITLTCFIVQVATGF). Cysteine 35 provides a ligand contact to heme c. Heme b-binding residues include histidine 86 and histidine 100. The next 3 helical transmembrane spans lie at 90–110 (ASMM…TGGF), 116–136 (LTWI…VTGY), and 186–206 (LHTF…FLMI). Histidine 187 and histidine 202 together coordinate heme b.

It belongs to the cytochrome b family. PetB subfamily. In terms of assembly, the 4 large subunits of the cytochrome b6-f complex are cytochrome b6, subunit IV (17 kDa polypeptide, PetD), cytochrome f and the Rieske protein, while the 4 small subunits are PetG, PetL, PetM and PetN. The complex functions as a dimer. Heme b is required as a cofactor. Heme c serves as cofactor.

Its subcellular location is the plastid. The protein localises to the chloroplast thylakoid membrane. Functionally, component of the cytochrome b6-f complex, which mediates electron transfer between photosystem II (PSII) and photosystem I (PSI), cyclic electron flow around PSI, and state transitions. In Chara vulgaris (Common stonewort), this protein is Cytochrome b6.